Reading from the N-terminus, the 554-residue chain is Glucose-6-phosphate isomerase (554 aa).

Glutamate 359 (proton donor) is an active-site residue. Catalysis depends on residues histidine 390 and lysine 518.

This sequence belongs to the GPI family.

Its subcellular location is the cytoplasm. The enzyme catalyses alpha-D-glucose 6-phosphate = beta-D-fructose 6-phosphate. The protein operates within carbohydrate biosynthesis; gluconeogenesis. It participates in carbohydrate degradation; glycolysis; D-glyceraldehyde 3-phosphate and glycerone phosphate from D-glucose: step 2/4. Functionally, catalyzes the reversible isomerization of glucose-6-phosphate to fructose-6-phosphate. The polypeptide is Glucose-6-phosphate isomerase (Pseudomonas fluorescens (strain Pf0-1)).